The sequence spans 141 residues: MAANLLFSEDQIKEYKTKFDAFDRNNDGNFPTMFLGNAMKSVGHVLTAAELENSRRVRKGTTTFPQFLAMILDKKCRKVFKAMDKDDKDKLLSADEVRQAMLSFDRQITEDKIKEMIEKADFPNDGKCSLEEFVKMVMNFC.

4 EF-hand domains span residues 10–42 (DQIKEYKTKFDAFDRNNDGNFPTMFLGNAMKSV), 43–72 (GHVLTAAELENSRRVRKGTTTFPQFLAMIL), 73–107 (DKKCRKVFKAMDKDDKDKLLSADEVRQAMLSFDRQ), and 108–141 (ITEDKIKEMIEKADFPNDGKCSLEEFVKMVMNFC). The Ca(2+) site is built by aspartate 23, asparagine 25, aspartate 27, and asparagine 29. Aspartate 84, aspartate 86, lysine 90, aspartate 95, aspartate 121, aspartate 125, lysine 127, and glutamate 132 together coordinate Ca(2+).

As to expression, found in cell lineages giving rise to the aboral ectoderm, a squamous epithelium covering the surface of the late stage embryo and larva.

Functionally, calcium-binding protein involved in larval development and metamorphosis. Likely to function as calcium buffers mediating the transport of calcium from the sea water to the blastocoel where calcium is required for skeleton formation. The protein is Calcium-binding protein SPEC 2D (SPEC2D) of Strongylocentrotus purpuratus (Purple sea urchin).